The following is a 197-amino-acid chain: Ribonuclease HII (197 aa).

The 189-residue stretch at 9-197 (ELIAGVDEVG…APVKKALEQF (189 aa)) folds into the RNase H type-2 domain. Positions 15, 16, and 107 each coordinate a divalent metal cation.

Belongs to the RNase HII family. Mn(2+) serves as cofactor. The cofactor is Mg(2+).

The protein localises to the cytoplasm. It carries out the reaction Endonucleolytic cleavage to 5'-phosphomonoester.. Functionally, endonuclease that specifically degrades the RNA of RNA-DNA hybrids. The protein is Ribonuclease HII of Haemophilus influenzae (strain 86-028NP).